The following is a 224-amino-acid chain: Putative tyrosine-protein phosphatase OCA6 (224 aa).

T2 bears the Phosphothreonine mark. Residues 8–170 (QFSTVQPNLY…FNSEIEVDDL (163 aa)) form the Tyrosine-protein phosphatase domain. Residue C114 is the Phosphocysteine intermediate of the active site.

The protein belongs to the protein-tyrosine phosphatase family.

It is found in the cytoplasm. It catalyses the reaction O-phospho-L-tyrosyl-[protein] + H2O = L-tyrosyl-[protein] + phosphate. Functionally, required for replication of Brome mosaic virus (BMV). This Saccharomyces cerevisiae (strain ATCC 204508 / S288c) (Baker's yeast) protein is Putative tyrosine-protein phosphatase OCA6 (OCA6).